The primary structure comprises 295 residues: Bifunctional protein FolD (295 aa).

NADP(+) is bound by residues Gly172–Ser174, Ser197, and Ile238.

The protein belongs to the tetrahydrofolate dehydrogenase/cyclohydrolase family. As to quaternary structure, homodimer.

The enzyme catalyses (6R)-5,10-methylene-5,6,7,8-tetrahydrofolate + NADP(+) = (6R)-5,10-methenyltetrahydrofolate + NADPH. The catalysed reaction is (6R)-5,10-methenyltetrahydrofolate + H2O = (6R)-10-formyltetrahydrofolate + H(+). It participates in one-carbon metabolism; tetrahydrofolate interconversion. In terms of biological role, catalyzes the oxidation of 5,10-methylenetetrahydrofolate to 5,10-methenyltetrahydrofolate and then the hydrolysis of 5,10-methenyltetrahydrofolate to 10-formyltetrahydrofolate. This Rickettsia akari (strain Hartford) protein is Bifunctional protein FolD.